Here is a 301-residue protein sequence, read N- to C-terminus: MSTDHSPDPLLLTKAETLVEALPYMQRYAGETFVVKYGGHAMGDPEAARDFAEDIVLLKAVGINPVVVHGGGPQIGKMLKTLGVESRFVDGLRVTDAETARVAEMVLCGSINKEIVSWIAQAGGRAVGLSGKDGRMVVAEKVRRTQRDPDSNIEKAVDLGFVGEPADIDRRVIDTISKAGMIPVVAPIAIGEDGHTYNVNADTMAGAIAIALGAARLFLLTDVAGVLDKEKKLIRDLTPRQINALREDGTIQGGMIPKLETCVHAVEGGVDAAVILDGRVPHAMLIEAFTRRGAGTLIGMG.

Residues 71-72 (GG), arginine 93, and asparagine 198 each bind substrate.

The protein belongs to the acetylglutamate kinase family. ArgB subfamily.

It localises to the cytoplasm. It catalyses the reaction N-acetyl-L-glutamate + ATP = N-acetyl-L-glutamyl 5-phosphate + ADP. Its pathway is amino-acid biosynthesis; L-arginine biosynthesis; N(2)-acetyl-L-ornithine from L-glutamate: step 2/4. Functionally, catalyzes the ATP-dependent phosphorylation of N-acetyl-L-glutamate. The polypeptide is Acetylglutamate kinase (Rhizorhabdus wittichii (strain DSM 6014 / CCUG 31198 / JCM 15750 / NBRC 105917 / EY 4224 / RW1) (Sphingomonas wittichii)).